The sequence spans 284 residues: Rubber cis-polyprenyltransferase HRT2 (284 aa).

D41 is an active-site residue.

The protein belongs to the UPP synthase family. As to expression, predominantly expressed in latex.

The enzyme catalyses (cis-prenyl)(n)-diphosphate + isopentenyl diphosphate = (cis-prenyl)(n+1)-diphosphate + diphosphate. Its function is as follows. Proposed to be involved in rubber biosynthesis as a particle-bound rubber transferase responsible for the cis-1,4-polymerization of isoprene subunits. Probably requires additional factors for the production of high molecular mass rubber. The chain is Rubber cis-polyprenyltransferase HRT2 (HRT2) from Hevea brasiliensis (Para rubber tree).